Consider the following 245-residue polypeptide: MIIPALDLIDGTVVRLHQGDYGQQRDYGNDPLPRLQDYAAQGAEVLHLVDLTGAKDPAKRQITLLKSLVSGVDVPVQVGGGVRTEEDVAALLEAGVARVVVGSTAVKDPEMVKDWFRRFGADALVLALDVRIDDQGNKQVAVSGWQENSGVTLEELVEIYLPVGLKHVLCTDISRDGTLAGSNVSLYEEVCARYPQVAFQSSGGIGDLADIAALRGTGVRGVIVGRALLEEKFTVTEAIQCWQNG.

Asp-7 acts as the Proton acceptor in catalysis. The active-site Proton donor is the Asp-129.

This sequence belongs to the HisA/HisF family.

The protein localises to the cytoplasm. It catalyses the reaction 1-(5-phospho-beta-D-ribosyl)-5-[(5-phospho-beta-D-ribosylamino)methylideneamino]imidazole-4-carboxamide = 5-[(5-phospho-1-deoxy-D-ribulos-1-ylimino)methylamino]-1-(5-phospho-beta-D-ribosyl)imidazole-4-carboxamide. It participates in amino-acid biosynthesis; L-histidine biosynthesis; L-histidine from 5-phospho-alpha-D-ribose 1-diphosphate: step 4/9. In Enterobacter sp. (strain 638), this protein is 1-(5-phosphoribosyl)-5-[(5-phosphoribosylamino)methylideneamino] imidazole-4-carboxamide isomerase.